A 146-amino-acid chain; its full sequence is Inner membrane protein YdgK (146 aa).

Topologically, residues 1–12 are cytoplasmic; sequence MTTTTPQRIGGW. A helical membrane pass occupies residues 13 to 33; sequence LLGPLAWLLVALLSTTLALLL. The Periplasmic portion of the chain corresponds to 34-59; that stretch reads YTAALSSPQTFQTLGGQALTTQILWG. The helical transmembrane segment at 60 to 80 threads the bilayer; the sequence is VSFITAIALWYYTLWLTIAFF. At 81 to 89 the chain is on the cytoplasmic side; sequence KRRRCVPKH. Residues 90 to 110 traverse the membrane as a helical segment; it reads YIIWLLISVLLAVKAFAFSPV. Topologically, residues 111–112 are periplasmic; the sequence is ED. A helical transmembrane segment spans residues 113–133; the sequence is GIAVRQLLFTLLATALIVPYF. Topologically, residues 134 to 146 are cytoplasmic; sequence KRSSRVKATFVNP.

The protein to Synechocystis PCC 6803 sll0481.

The protein resides in the cell inner membrane. The polypeptide is Inner membrane protein YdgK (ydgK) (Escherichia coli (strain K12)).